A 287-amino-acid polypeptide reads, in one-letter code: Putative daunorubicin C-13 ketoreductase DnrU (287 aa).

NADP(+) is bound at residue 24–30; that stretch reads GATSGIG. A substrate-binding site is contributed by Ser149. The active-site Proton acceptor is Tyr175.

This sequence belongs to the short-chain dehydrogenases/reductases (SDR) family.

In terms of biological role, could reduce the 13-carbonyl of daunorubicin to produce (13S)-13-dihydrodaunorubicin. Could also be able to reduce the 13-carbonyl of doxorubicin. The protein is Putative daunorubicin C-13 ketoreductase DnrU of Streptomyces sp. (strain C5).